The sequence spans 199 residues: MARKRTSKNDPLRMYLNYVRKLQTMGDAYDESAKYRIANFENGFKSLHMVENEFKQYLANVIDEAIKSGASPQDLPYVNEIKLALMKIFTSWLKYSNEKLGANEIAINVAGTATMTLTENLYGTRVSCEEAVSLINSIFAVWVGVEPFEAEEREGACLVTPRSPLPPVPISSPTGFSAPIQEVLQAKSPEEIIGVKGGA.

As to quaternary structure, heterodimer composed of major capsid protein VP4 and major capsid protein VP5.

It localises to the virion. Its function is as follows. Self-assembles to form a helical, filamentous nucleocapsid. Together with capsid protein 1, wraps arounds the DNA and maintains it in an A-form. Capsid proteins probably maintain the DNA in A-form by non-specific desolvation and specific coordination of the DNA phosphate groups by positively charged residues. This certainly protects the viral DNA under conditions such as the extreme desiccation of its host. The chain is Major capsid protein VP5 from Saccharolobus shibatae (SFV1).